Here is a 1681-residue protein sequence, read N- to C-terminus: Sodium channel protein type 7 subunit alpha (1681 aa).

Topologically, residues 1–118 are cytoplasmic; sequence MLTSPEPKGL…RRAAIKALVH (118 aa). One copy of the I repeat lies at 101 to 402; the sequence is TLSPLNSLRR…ILTMTYEKEK (302 aa). The chain crosses the membrane as a helical span at residues 119 to 138; that stretch reads PLFRLLILISVLTDSILMCM. The Extracellular segment spans residues 139–142; sequence SNLP. The helical transmembrane segment at 143 to 168 threads the bilayer; that stretch reads EWILAIENTLLGIYAFEILVKVIARG. The Cytoplasmic segment spans residues 169–179; that stretch reads IWAGSFSFLGD. A helical membrane pass occupies residues 180-197; it reads LWNWLDFSVTLFELITRF. Topologically, residues 198-201 are extracellular; it reads SPLS. A helical membrane pass occupies residues 202–220; sequence SFLMLKTIRTFRILKIIPL. Residues 221–238 are Cytoplasmic-facing; it reads NHGLQSIVMTLAQCLKKL. Residues 239-260 traverse the membrane as a helical segment; that stretch reads FGAIALALFFLAVFSLLGMGLF. At 261-339 the chain is on the extracellular side; the sequence is MGNLKHKCLR…PDNGFTSFDN (79 aa). A disulfide bridge connects residues C268 and C308. N-linked (GlcNAc...) asparagine glycosylation is found at N277, N282, N288, and N310. Residues 340-367 constitute an intramembrane region (pore-forming); it reads FGWSLLAMFRLMTQDYPELLYHQILYAS. Residue G368 is a topological domain, extracellular. Residues 369 to 408 traverse the membrane as a helical segment; sequence KVYMIFFVMISFWFAFYLTSLFLGILTMTYEKEKQRACEE. The Cytoplasmic segment spans residues 409-506; sequence SGGLDPKCQQ…EFADRVITHP (98 aa). The stretch at 488–757 is one II repeat; sequence CSPCWVKLNE…QLAMARIKSG (270 aa). Residues 507–522 traverse the membrane as a helical segment; that stretch reads LADLFLVICIVLNICF. Residues 523–531 are Extracellular-facing; it reads LALEHFPMS. Residues 532-560 traverse the membrane as a helical segment; the sequence is EELRSLLHVGNLVFIGIYTIEMILKIIAM. Residues 561-569 are Cytoplasmic-facing; sequence HPYGYFQIS. A helical transmembrane segment spans residues 570–587; it reads WNIFDSILVVLELTEILL. Residues 588–593 are Extracellular-facing; the sequence is ADVEGL. The helical transmembrane segment at 594 to 609 threads the bilayer; the sequence is AVLITVPLIFIKLGKY. Topologically, residues 610–626 are cytoplasmic; that stretch reads GPPFKSLMRILGSSLMA. Residues 627-655 traverse the membrane as a helical segment; sequence LKDLVLLLCIFVYFSAVFGMKLFGRSYKD. Residues 656-673 lie on the Extracellular side of the membrane; that stretch reads CVCHIKEDCQPQRWHMSD. Intrachain disulfides connect C658–C664 and C696–C705. The segment at residues 674-700 is an intramembrane region (pore-forming); it reads FLHAYMTVFRILCGEWIETLWECMEVA. A topological domain (extracellular) is located at residue G701. Residues 702–732 traverse the membrane as a helical segment; sequence QAWCIPFYMMVILIGNLLILYLFVTLVSSFS. The Cytoplasmic portion of the chain corresponds to 733 to 934; sequence YYDATSEVNK…KTCCKIVENS (202 aa). Residues 806–834 show a composition bias toward polar residues; it reads YKDQSSSTEKTPVTESESQSLIASPSASE. Residues 806–875 form a disordered region; it reads YKDQSSSTEK…MKQSSSSECS (70 aa). S843 carries the post-translational modification Phosphoserine. Residues 916-1224 form an III repeat; the sequence is NGKIWKNIRK…KKQYRALKKL (309 aa). A helical transmembrane segment spans residues 935-953; the sequence is WFECFIGLVTLLCTGTLAL. Residues 954-961 lie on the Extracellular side of the membrane; the sequence is EDIYIDQR. A helical membrane pass occupies residues 962–990; it reads KTTKILLEYADMIFAYIFILEMLLKWVAY. Residues 991–998 are Cytoplasmic-facing; sequence GFKAFFSN. Residues 999–1020 form a helical membrane-spanning segment; sequence NWYKLDFMVVIVFCLSLIGKTR. A topological domain (extracellular) is located at residue E1021. A helical transmembrane segment spans residues 1022-1040; the sequence is DLNPLTSIKFLRALRVLSQ. Over 1041–1055 the chain is Cytoplasmic; the sequence is FERMKVVLRALIKTT. The helical transmembrane segment at 1056–1080 threads the bilayer; that stretch reads LPTVSVFLVCLMIWLLFSVIGVQLF. Residues 1081–1127 lie on the Extracellular side of the membrane; sequence AGKFYECIDPTKGERFPVFEVMNKSQCEKLLFNESMPWENAKLNFDN. A disulfide bridge links C1087 with C1107. 2 N-linked (GlcNAc...) asparagine glycosylation sites follow: N1103 and N1113. Positions 1128-1154 form an intramembrane region, pore-forming; that stretch reads VGNGFLSLLQVATFNGWISIMNSAIDS. Over 1155 to 1167 the chain is Extracellular; that stretch reads VGVNMQPSFEYNL. A helical transmembrane segment spans residues 1168 to 1202; sequence YMYSYFIIFVIFGLFLPLCMLIGVIIRNFNKQKIK. The Cytoplasmic portion of the chain corresponds to 1203 to 1250; that stretch reads QGGSNIFITVKQKKQYRALKKLLYADVQKPTPRPRNKFQGFLFDLVTH. The stretch at 1233 to 1531 is one IV repeat; sequence TPRPRNKFQG…WNRFDPDRTQ (299 aa). Residues 1251–1272 form a helical membrane-spanning segment; sequence RVFNVIIILLICFQATTIMIQK. Residues 1273 to 1276 lie on the Extracellular side of the membrane; it reads DEQS. A helical membrane pass occupies residues 1277-1305; sequence PQMETAIFWMNSIFVMLFTLECILKLTAF. Topologically, residues 1306 to 1312 are cytoplasmic; that stretch reads RCHYFTS. A helical membrane pass occupies residues 1313 to 1338; sequence AWNVHDFMVVIFSITGLLLPLTIGQY. Residues 1339–1341 lie on the Extracellular side of the membrane; that stretch reads FVP. The chain crosses the membrane as a helical span at residues 1342–1362; sequence PSLVQLILLSRVIHILRPGKG. Residues 1363-1377 lie on the Cytoplasmic side of the membrane; it reads PKVFHDLMLPLILAL. The chain crosses the membrane as a helical span at residues 1378–1402; sequence PALLNISLLIFLVMFIYAIFGMYNF. Topologically, residues 1403 to 1420 are extracellular; the sequence is AYVKKEAGINDVSNFETF. An intramembrane region (pore-forming) is located at residues 1421–1444; sequence GSSMLCLFQVTTFSGWDGMLDAIF. Topologically, residues 1445–1468 are extracellular; it reads NSQWSDCDPDKINPGTQVKGDCGS. C1451 and C1466 form a disulfide bridge. The helical transmembrane segment at 1469 to 1504 threads the bilayer; the sequence is PSVGISYFVSYILISWLIIVNMYIVLIMEFLSIPSQ. At 1505 to 1681 the chain is on the cytoplasmic side; it reads KKSRTLSEDD…EEKASIQTQI (177 aa). Over residues 1647 to 1662 the composition is skewed to basic and acidic residues; it reads NVSDTPAIDDRRDDLT. The interval 1647-1681 is disordered; the sequence is NVSDTPAIDDRRDDLTSKGAHSGKIEEKASIQTQI.

Belongs to the sodium channel (TC 1.A.1.10) family. SCN7A subfamily. In terms of assembly, the sodium channel formed by SCN7A is probably a heterooligomeric complex consisting of the ion conducting pore forming alpha subunit SCN7A and regulatory beta subunits such as SCN3B. Interacts with ATP1A1; activates ATP1A1 and thereby indirectly signals to nearby neurons to regulate sodium homeostasis. Not tissue specific but widely expressed. Expressed in regions of the central nervous system that control body fluid ionic balance.

Its subcellular location is the cell membrane. The catalysed reaction is Na(+)(in) = Na(+)(out). In terms of biological role, sodium leak channel functioning as an osmosensor regulating sodium ion levels in various tissues and organs. While most sodium channels are voltage-gated, SCN7A is not and lets sodium flow through membrane along its concentration gradient. In glial cells of the central nervous system, senses body-fluid sodium levels and controls salt intake behavior as well as voluntary water intake through activation of nearby neurons to maintain appropriate sodium levels in the body. By mediating sodium influx into keratinocytes, also plays a role in skin barrier homeostasis. In Mus musculus (Mouse), this protein is Sodium channel protein type 7 subunit alpha.